We begin with the raw amino-acid sequence, 492 residues long: N-succinylglutamate 5-semialdehyde dehydrogenase (492 aa).

An NAD(+)-binding site is contributed by 220–225; that stretch reads GSANTG. Catalysis depends on residues Glu-243 and Cys-277.

Belongs to the aldehyde dehydrogenase family. AstD subfamily.

It carries out the reaction N-succinyl-L-glutamate 5-semialdehyde + NAD(+) + H2O = N-succinyl-L-glutamate + NADH + 2 H(+). It participates in amino-acid degradation; L-arginine degradation via AST pathway; L-glutamate and succinate from L-arginine: step 4/5. Its function is as follows. Catalyzes the NAD-dependent reduction of succinylglutamate semialdehyde into succinylglutamate. This is N-succinylglutamate 5-semialdehyde dehydrogenase from Escherichia coli O139:H28 (strain E24377A / ETEC).